The chain runs to 315 residues: Melanoma-associated antigen 9 (315 aa).

A compositionally biased stretch (basic and acidic residues) spans methionine 1 to aspartate 13. Residues methionine 1–serine 67 form a disordered region. Positions serine 50–serine 67 are enriched in low complexity. One can recognise an MAGE domain in the interval leucine 108 to valine 307.

As to expression, expressed in many tumors of several types, such as melanoma, head and neck squamous cell carcinoma, lung carcinoma and breast carcinoma, but not in normal tissues except for testes and placenta.

Functionally, not known, though may play a role in embryonal development and tumor transformation or aspects of tumor progression. This Homo sapiens (Human) protein is Melanoma-associated antigen 9 (MAGEA9).